Here is a 66-residue protein sequence, read N- to C-terminus: Pancreatic polypeptide prohormone (66 aa).

Position 36 is a tyrosine amide (tyrosine 36). Positions 60–66 (ELSPMDV) are excised as a propeptide.

It belongs to the NPY family.

Its subcellular location is the secreted. Its function is as follows. Hormone secreted by pancreatic cells that acts as a regulator of pancreatic and gastrointestinal functions probably by signaling through the G protein-coupled receptor NPY4R2. The polypeptide is Pancreatic polypeptide prohormone (PPY) (Felis catus (Cat)).